Consider the following 349-residue polypeptide: Glycerol-3-phosphate dehydrogenase [NAD(+)], cytoplasmic (349 aa).

Position 10–15 (10–15 (GSGNWG)) interacts with NAD(+). Substrate is bound at residue K120. A153 is a binding site for NAD(+). Phosphoserine is present on S154. K204 serves as the catalytic Proton acceptor. Residue R269 participates in NAD(+) binding. 269–270 (RN) serves as a coordination point for substrate. N6-succinyllysine is present on K289. Positions 296 and 298 each coordinate NAD(+). Residue Y326 is modified to Phosphotyrosine.

The protein belongs to the NAD-dependent glycerol-3-phosphate dehydrogenase family. Homodimer.

It localises to the cytoplasm. The catalysed reaction is sn-glycerol 3-phosphate + NAD(+) = dihydroxyacetone phosphate + NADH + H(+). Its function is as follows. Has glycerol-3-phosphate dehydrogenase activity. In Mus musculus (Mouse), this protein is Glycerol-3-phosphate dehydrogenase [NAD(+)], cytoplasmic.